The sequence spans 145 residues: Neuromedin-S (145 aa).

A signal peptide spans 1-27 (MRSEKHLPPLPLLLAICCLGTLHPSSG). 2 propeptides span residues 28–89 (FPQS…HEIY) and 92–117 (FLFQ…AEYT). Asparagine amide is present on Asn-136. The propeptide occupies 140-145 (VSINEH).

The protein belongs to the NmU family. In terms of tissue distribution, expressed by the skin glands.

It localises to the secreted. Functionally, stimulates uterine smooth muscle contraction. Synthetic peptide NmS-17 induces calcium mobilization in CHO cells transfected with either human FM-3/GPR66 (EC(50)=0.085 nM) or FM-4/TGR-1 (EC(50)=0.231 nM) NmU/NmS receptors. In Bombina orientalis (Oriental fire-bellied toad), this protein is Neuromedin-S (nms).